We begin with the raw amino-acid sequence, 169 residues long: Peptide deformylase (169 aa).

Fe cation is bound by residues Cys91 and His133. Glu134 is a catalytic residue. His137 is a Fe cation binding site.

It belongs to the polypeptide deformylase family. Fe(2+) serves as cofactor.

It catalyses the reaction N-terminal N-formyl-L-methionyl-[peptide] + H2O = N-terminal L-methionyl-[peptide] + formate. Functionally, removes the formyl group from the N-terminal Met of newly synthesized proteins. Requires at least a dipeptide for an efficient rate of reaction. N-terminal L-methionine is a prerequisite for activity but the enzyme has broad specificity at other positions. This Aliivibrio salmonicida (strain LFI1238) (Vibrio salmonicida (strain LFI1238)) protein is Peptide deformylase.